A 657-amino-acid polypeptide reads, in one-letter code: tRNA 5-methylaminomethyl-2-thiouridine biosynthesis bifunctional protein MnmC (657 aa).

Residues 1–239 (MTDRIVPATL…KRAMLVGEFA (239 aa)) are tRNA (mnm(5)s(2)U34)-methyltransferase. The tract at residues 263–657 (IGAGLAGCAV…VRALRHGRVA (395 aa)) is FAD-dependent cmnm(5)s(2)U34 oxidoreductase.

This sequence in the N-terminal section; belongs to the methyltransferase superfamily. tRNA (mnm(5)s(2)U34)-methyltransferase family. The protein in the C-terminal section; belongs to the DAO family. FAD serves as cofactor.

The protein localises to the cytoplasm. It catalyses the reaction 5-aminomethyl-2-thiouridine(34) in tRNA + S-adenosyl-L-methionine = 5-methylaminomethyl-2-thiouridine(34) in tRNA + S-adenosyl-L-homocysteine + H(+). Functionally, catalyzes the last two steps in the biosynthesis of 5-methylaminomethyl-2-thiouridine (mnm(5)s(2)U) at the wobble position (U34) in tRNA. Catalyzes the FAD-dependent demodification of cmnm(5)s(2)U34 to nm(5)s(2)U34, followed by the transfer of a methyl group from S-adenosyl-L-methionine to nm(5)s(2)U34, to form mnm(5)s(2)U34. This chain is tRNA 5-methylaminomethyl-2-thiouridine biosynthesis bifunctional protein MnmC, found in Burkholderia mallei (strain SAVP1).